The sequence spans 72 residues: Translation initiation factor IF-1 (72 aa).

The S1-like domain maps to 1-72 (MAKEGAIEVE…TRGRIVYRYK (72 aa)).

The protein belongs to the IF-1 family. As to quaternary structure, component of the 30S ribosomal translation pre-initiation complex which assembles on the 30S ribosome in the order IF-2 and IF-3, IF-1 and N-formylmethionyl-tRNA(fMet); mRNA recruitment can occur at any time during PIC assembly.

The protein resides in the cytoplasm. In terms of biological role, one of the essential components for the initiation of protein synthesis. Stabilizes the binding of IF-2 and IF-3 on the 30S subunit to which N-formylmethionyl-tRNA(fMet) subsequently binds. Helps modulate mRNA selection, yielding the 30S pre-initiation complex (PIC). Upon addition of the 50S ribosomal subunit IF-1, IF-2 and IF-3 are released leaving the mature 70S translation initiation complex. This chain is Translation initiation factor IF-1, found in Corynebacterium diphtheriae (strain ATCC 700971 / NCTC 13129 / Biotype gravis).